Here is a 306-residue protein sequence, read N- to C-terminus: Putative S-adenosyl-L-methionine-dependent methyltransferase FRAAL5401 (306 aa).

S-adenosyl-L-methionine is bound by residues D126 and 155–156 (DL). The segment at 201–225 (LSAPESRVATENRPNPKPGDEDRTK) is disordered.

This sequence belongs to the UPF0677 family.

Its function is as follows. Exhibits S-adenosyl-L-methionine-dependent methyltransferase activity. The chain is Putative S-adenosyl-L-methionine-dependent methyltransferase FRAAL5401 from Frankia alni (strain DSM 45986 / CECT 9034 / ACN14a).